The following is a 158-amino-acid chain: Cyclic pyranopterin monophosphate synthase (158 aa).

Substrate-binding positions include 74-76 and 112-113; these read MCH and ME. Aspartate 127 is a catalytic residue.

The protein belongs to the MoaC family. Homohexamer; trimer of dimers.

It catalyses the reaction (8S)-3',8-cyclo-7,8-dihydroguanosine 5'-triphosphate = cyclic pyranopterin phosphate + diphosphate. It functions in the pathway cofactor biosynthesis; molybdopterin biosynthesis. Catalyzes the conversion of (8S)-3',8-cyclo-7,8-dihydroguanosine 5'-triphosphate to cyclic pyranopterin monophosphate (cPMP). The chain is Cyclic pyranopterin monophosphate synthase from Helicobacter pylori (strain J99 / ATCC 700824) (Campylobacter pylori J99).